The sequence spans 353 residues: Holliday junction branch migration complex subunit RuvB (353 aa).

Residues 4-185 (ADRLITATGG…FGIVQRLEFY (182 aa)) form a large ATPase domain (RuvB-L) region. Residues Ile24, Arg25, Gly66, Lys69, Thr70, Thr71, 132-134 (EDF), Arg175, Tyr185, and Arg222 each bind ATP. Thr70 is a Mg(2+) binding site. The segment at 186–256 (NIADLSTIVS…TADKALNLLD (71 aa)) is small ATPAse domain (RuvB-S). Positions 259–353 (EHGFDHQDRR…DDFGDEPVDL (95 aa)) are head domain (RuvB-H). DNA-binding residues include Arg295, Arg314, and Arg319.

Belongs to the RuvB family. Homohexamer. Forms an RuvA(8)-RuvB(12)-Holliday junction (HJ) complex. HJ DNA is sandwiched between 2 RuvA tetramers; dsDNA enters through RuvA and exits via RuvB. An RuvB hexamer assembles on each DNA strand where it exits the tetramer. Each RuvB hexamer is contacted by two RuvA subunits (via domain III) on 2 adjacent RuvB subunits; this complex drives branch migration. In the full resolvosome a probable DNA-RuvA(4)-RuvB(12)-RuvC(2) complex forms which resolves the HJ.

The protein resides in the cytoplasm. It carries out the reaction ATP + H2O = ADP + phosphate + H(+). Functionally, the RuvA-RuvB-RuvC complex processes Holliday junction (HJ) DNA during genetic recombination and DNA repair, while the RuvA-RuvB complex plays an important role in the rescue of blocked DNA replication forks via replication fork reversal (RFR). RuvA specifically binds to HJ cruciform DNA, conferring on it an open structure. The RuvB hexamer acts as an ATP-dependent pump, pulling dsDNA into and through the RuvAB complex. RuvB forms 2 homohexamers on either side of HJ DNA bound by 1 or 2 RuvA tetramers; 4 subunits per hexamer contact DNA at a time. Coordinated motions by a converter formed by DNA-disengaged RuvB subunits stimulates ATP hydrolysis and nucleotide exchange. Immobilization of the converter enables RuvB to convert the ATP-contained energy into a lever motion, pulling 2 nucleotides of DNA out of the RuvA tetramer per ATP hydrolyzed, thus driving DNA branch migration. The RuvB motors rotate together with the DNA substrate, which together with the progressing nucleotide cycle form the mechanistic basis for DNA recombination by continuous HJ branch migration. Branch migration allows RuvC to scan DNA until it finds its consensus sequence, where it cleaves and resolves cruciform DNA. The polypeptide is Holliday junction branch migration complex subunit RuvB (Pseudomonas syringae pv. syringae (strain B728a)).